A 248-amino-acid chain; its full sequence is Homeobox-leucine zipper protein HOX15 (248 aa).

Residues 1-44 (MAQDDEDVGLALGLSLGSGGHRRQRESRDEAPSSAAASLLTLRL) are disordered. Over residues 32–44 (PSSAAASLLTLRL) the composition is skewed to low complexity. The homeobox DNA-binding region spans 91-150 (NSRKKLRLSKEQSALLEDRFKEHSTLNPKQKVALAKQLNLRPRQVEVWFQNRRARTKLKQ). Residues 149-193 (KQTEVDCELLKRCCETLTEENRRLHRELQQLRALTHSTAAGFFMA) are leucine-zipper. The disordered stretch occupies residues 223–248 (PTAAADRTNKPTAPHLFSPFAKSAAC).

The protein belongs to the HD-ZIP homeobox family. Class II subfamily. In terms of tissue distribution, expressed in seedlings, stems, leaf blades and panicles.

It is found in the nucleus. Functionally, probable transcription factor. The sequence is that of Homeobox-leucine zipper protein HOX15 (HOX15) from Oryza sativa subsp. indica (Rice).